A 388-amino-acid polypeptide reads, in one-letter code: Succinate--CoA ligase [ADP-forming] subunit beta (388 aa).

Residues 9 to 244 enclose the ATP-grasp domain; sequence KDLLSSYDIA…PSQENVRDVL (236 aa). Residues Lys46, 53 to 55, Val102, and Glu107 each bind ATP; that span reads GRG. Mg(2+) contacts are provided by Asn199 and Asp213. Substrate contacts are provided by residues Asn264 and 321 to 323; that span reads GIM.

The protein belongs to the succinate/malate CoA ligase beta subunit family. As to quaternary structure, heterotetramer of two alpha and two beta subunits. It depends on Mg(2+) as a cofactor.

It catalyses the reaction succinate + ATP + CoA = succinyl-CoA + ADP + phosphate. The catalysed reaction is GTP + succinate + CoA = succinyl-CoA + GDP + phosphate. It functions in the pathway carbohydrate metabolism; tricarboxylic acid cycle; succinate from succinyl-CoA (ligase route): step 1/1. Functionally, succinyl-CoA synthetase functions in the citric acid cycle (TCA), coupling the hydrolysis of succinyl-CoA to the synthesis of either ATP or GTP and thus represents the only step of substrate-level phosphorylation in the TCA. The beta subunit provides nucleotide specificity of the enzyme and binds the substrate succinate, while the binding sites for coenzyme A and phosphate are found in the alpha subunit. This is Succinate--CoA ligase [ADP-forming] subunit beta from Chlamydia felis (strain Fe/C-56) (Chlamydophila felis).